Here is a 312-residue protein sequence, read N- to C-terminus: Elongation factor Ts (312 aa).

Residues 80-83 (TDFV) are involved in Mg(2+) ion dislocation from EF-Tu.

Belongs to the EF-Ts family.

It localises to the cytoplasm. Functionally, associates with the EF-Tu.GDP complex and induces the exchange of GDP to GTP. It remains bound to the aminoacyl-tRNA.EF-Tu.GTP complex up to the GTP hydrolysis stage on the ribosome. The protein is Elongation factor Ts of Paramagnetospirillum magneticum (strain ATCC 700264 / AMB-1) (Magnetospirillum magneticum).